Here is a 386-residue protein sequence, read N- to C-terminus: tRNA N6-adenosine threonylcarbamoyltransferase (386 aa).

The a divalent metal cation site is built by His141, His145, and Tyr162. Substrate-binding positions include 162 to 166 (YVSGG), Asp194, Gly209, Glu213, and Asn315. Asp344 lines the a divalent metal cation pocket.

Belongs to the KAE1 / TsaD family. As to quaternary structure, component of the EKC/KEOPS complex composed of at least BUD32, CGI121, GON7, KAE1 and PCC1; the whole complex dimerizes. A divalent metal cation serves as cofactor.

The protein localises to the cytoplasm. It is found in the nucleus. The catalysed reaction is L-threonylcarbamoyladenylate + adenosine(37) in tRNA = N(6)-L-threonylcarbamoyladenosine(37) in tRNA + AMP + H(+). In terms of biological role, component of the EKC/KEOPS complex that is required for the formation of a threonylcarbamoyl group on adenosine at position 37 (t(6)A37) in tRNAs that read codons beginning with adenine. The complex is probably involved in the transfer of the threonylcarbamoyl moiety of threonylcarbamoyl-AMP (TC-AMP) to the N6 group of A37. KAE1 likely plays a direct catalytic role in this reaction, but requires other protein(s) of the complex to fulfill this activity. The EKC/KEOPS complex also promotes both telomere uncapping and telomere elongation. The complex is required for efficient recruitment of transcriptional coactivators. This Saccharomyces cerevisiae (strain ATCC 204508 / S288c) (Baker's yeast) protein is tRNA N6-adenosine threonylcarbamoyltransferase.